A 712-amino-acid chain; its full sequence is Effector protein HopM1 (712 aa).

The disordered stretch occupies residues 22–58 (DTVPAQTAHPNAVTAGMNPPLTPDQSGSHATESSSAG). A compositionally biased stretch (polar residues) spans 44–57 (PDQSGSHATESSSA).

In terms of assembly, interacts with the chaperone ShcM. Interacts with host plant BIG5/ATMIN7.

It localises to the secreted. The protein localises to the host membrane. Functionally, involved in the suppression of basal resistance and promotion of disease symptoms in plants. Mediates the ubiquitination and degradation, via the host proteasome, of a low-abundance immunity-associated protein in Arabidopsis thaliana. May be involved in the inhibition of a host vesicle trafficking pathway. This Pseudomonas syringae pv. tomato (strain ATCC BAA-871 / DC3000) protein is Effector protein HopM1 (hopM1).